The primary structure comprises 354 residues: Methylthioribose-1-phosphate isomerase (354 aa).

The active-site Proton donor is Asp246.

This sequence belongs to the eIF-2B alpha/beta/delta subunits family. MtnA subfamily.

It localises to the cytoplasm. The protein localises to the nucleus. It carries out the reaction 5-(methylsulfanyl)-alpha-D-ribose 1-phosphate = 5-(methylsulfanyl)-D-ribulose 1-phosphate. It participates in amino-acid biosynthesis; L-methionine biosynthesis via salvage pathway; L-methionine from S-methyl-5-thio-alpha-D-ribose 1-phosphate: step 1/6. Catalyzes the interconversion of methylthioribose-1-phosphate (MTR-1-P) into methylthioribulose-1-phosphate (MTRu-1-P). This is Methylthioribose-1-phosphate isomerase (mri1) from Xenopus laevis (African clawed frog).